Here is a 250-residue protein sequence, read N- to C-terminus: DNA repair protein RecO (250 aa).

It belongs to the RecO family.

Involved in DNA repair and RecF pathway recombination. This chain is DNA repair protein RecO, found in Staphylococcus aureus (strain COL).